A 345-amino-acid polypeptide reads, in one-letter code: Phosphate acyltransferase (345 aa).

This sequence belongs to the PlsX family. In terms of assembly, homodimer. Probably interacts with PlsY.

The protein resides in the cytoplasm. The catalysed reaction is a fatty acyl-[ACP] + phosphate = an acyl phosphate + holo-[ACP]. The protein operates within lipid metabolism; phospholipid metabolism. Its function is as follows. Catalyzes the reversible formation of acyl-phosphate (acyl-PO(4)) from acyl-[acyl-carrier-protein] (acyl-ACP). This enzyme utilizes acyl-ACP as fatty acyl donor, but not acyl-CoA. This Wolbachia sp. subsp. Drosophila simulans (strain wRi) protein is Phosphate acyltransferase.